The following is a 252-amino-acid chain: MIVKTEEELQALKEIGYICAKVRNTMQAATKPGITTKELDNIAKELFEEYGAISAPIHDENFPGQTCISVNEEVAHGIPSKRVIREGDLVNIDVSALKNGYYADTGISFVVGESDDPMKQKVCDVATMAFENAIAKVKPGTKLSNIGKAVHNTARQNDLKVIKNLTGHGVGLSLHEAPAHVLNYFDPKDKTLLTEGMVLAIEPFISSNASFVTEGKNEWAFETSDKSFVAQIEHTVIVTKDGPILTTKIEEE.

Substrate is bound at residue H76. 3 residues coordinate a divalent metal cation: D93, D104, and H168. H175 lines the substrate pocket. The a divalent metal cation site is built by E202 and E233.

This sequence belongs to the peptidase M24A family. Methionine aminopeptidase type 1 subfamily. In terms of assembly, monomer. Co(2+) serves as cofactor. It depends on Zn(2+) as a cofactor. The cofactor is Mn(2+). Fe(2+) is required as a cofactor.

It catalyses the reaction Release of N-terminal amino acids, preferentially methionine, from peptides and arylamides.. In terms of biological role, removes the N-terminal methionine from nascent proteins. The N-terminal methionine is often cleaved when the second residue in the primary sequence is small and uncharged (Met-Ala-, Cys, Gly, Pro, Ser, Thr, or Val). Requires deformylation of the N(alpha)-formylated initiator methionine before it can be hydrolyzed. The polypeptide is Methionine aminopeptidase (Staphylococcus aureus (strain MRSA252)).